Consider the following 265-residue polypeptide: Hydroxyethylthiazole kinase (265 aa).

Met36 serves as a coordination point for substrate. Residues Lys112 and Ser160 each coordinate ATP. Position 187 (Gly187) interacts with substrate.

It belongs to the Thz kinase family. The cofactor is Mg(2+).

The catalysed reaction is 5-(2-hydroxyethyl)-4-methylthiazole + ATP = 4-methyl-5-(2-phosphooxyethyl)-thiazole + ADP + H(+). It participates in cofactor biosynthesis; thiamine diphosphate biosynthesis; 4-methyl-5-(2-phosphoethyl)-thiazole from 5-(2-hydroxyethyl)-4-methylthiazole: step 1/1. Catalyzes the phosphorylation of the hydroxyl group of 4-methyl-5-beta-hydroxyethylthiazole (THZ). The polypeptide is Hydroxyethylthiazole kinase (Clostridium perfringens (strain 13 / Type A)).